Consider the following 213-residue polypeptide: Outer envelope pore protein 24B, chloroplastic (213 aa).

Over 1–3 the chain is Cytoplasmic; that stretch reads MAM. The beta stranded transmembrane segment at 4–13 threads the bilayer; sequence KASIKGKYDT. The Chloroplast intermembrane portion of the chain corresponds to 14 to 18; sequence DKTSG. A beta stranded membrane pass occupies residues 19–28; sequence IGSLAFNAGD. At 29–32 the chain is on the cytoplasmic side; sequence IKLR. A beta stranded transmembrane segment spans residues 33-42; the sequence is ATMTDATLVA. Topologically, residues 43–55 are chloroplast intermembrane; sequence GPTLTGLALAVEK. The chain crosses the membrane as a beta stranded span at residues 56-64; it reads PGSFIVEYN. Residues 65–70 lie on the Cytoplasmic side of the membrane; the sequence is VPKKDV. Residues 71–80 form a beta stranded membrane-spanning segment; it reads RFQFMNTVRI. Residues 81-93 are Chloroplast intermembrane-facing; sequence AEKPLNLTYIHSR. The beta stranded transmembrane segment at 94–103 threads the bilayer; that stretch reads ADNRTIVDGS. Residues 104–108 are Cytoplasmic-facing; the sequence is LVIDS. The beta stranded transmembrane segment at 109–118 threads the bilayer; it reads ANKLSANHMV. Residues 119 to 122 lie on the Chloroplast intermembrane side of the membrane; sequence GTNN. Residues 123–132 traverse the membrane as a beta stranded segment; sequence CKIKYTYAHG. The Cytoplasmic portion of the chain corresponds to 133–144; sequence GLATFEPCYDLA. The beta stranded transmembrane segment at 145-156 threads the bilayer; the sequence is KNTWDFAVSRRF. The Chloroplast intermembrane segment spans residues 157 to 159; that stretch reads YSG. Residues 160-168 form a beta stranded membrane-spanning segment; that stretch reads DNVRATYQT. Over 169 to 170 the chain is Cytoplasmic; sequence SS. A beta stranded membrane pass occupies residues 171-179; sequence KLLGMEWSR. Over 180 to 201 the chain is Chloroplast intermembrane; the sequence is NNKASGFKVCASVNLADELKTP. A beta stranded membrane pass occupies residues 202–211; it reads KLTAETTWNL. The Cytoplasmic segment spans residues 212–213; the sequence is EM.

This sequence belongs to the plastid outer envelope porin OEP24 (TC 1.B.28) family. As to quaternary structure, homooligomers form large rather nonselective pores in plastidial outer membranes.

The protein resides in the plastid. The protein localises to the etioplast membrane. Its subcellular location is the chloroplast outer membrane. Its function is as follows. High-conductance voltage-dependent solute channel with a slight selectivity for cations transporting triosephosphates, dicarboxylic acids, ATP, inorganic phosphate (Pi), sugars, and positively or negatively charged amino acids. In Arabidopsis thaliana (Mouse-ear cress), this protein is Outer envelope pore protein 24B, chloroplastic (OEP24B).